The chain runs to 123 residues: Small ribosomal subunit protein uS12c (123 aa).

It belongs to the universal ribosomal protein uS12 family. In terms of assembly, part of the 30S ribosomal subunit.

The protein localises to the plastid. Its subcellular location is the chloroplast. Its function is as follows. With S4 and S5 plays an important role in translational accuracy. Located at the interface of the 30S and 50S subunits. The sequence is that of Small ribosomal subunit protein uS12c (rps12) from Chlorokybus atmophyticus (Soil alga).